The sequence spans 119 residues: Large ribosomal subunit protein bL19 (119 aa).

The protein belongs to the bacterial ribosomal protein bL19 family.

Its function is as follows. This protein is located at the 30S-50S ribosomal subunit interface and may play a role in the structure and function of the aminoacyl-tRNA binding site. This is Large ribosomal subunit protein bL19 from Petrotoga mobilis (strain DSM 10674 / SJ95).